A 198-amino-acid polypeptide reads, in one-letter code: MGLGVLCLALVLLGVLQSQAQDSTQNLIPAPPLISVPLQPGFWTERFQGRWFVVGLAGNAVQKERQSRFTMYSTIYELQEDNSYNVTSILVRGQGCRYWIRTFVPSSRPGQFTLGNIHSYPQIQSYDVQVADTDYDQFAMVFFQKTSENKQYFKVTLYGRTKGLSDELKERFVSFAKSLGLKDNNIVFSVPTDQCIDN.

The signal sequence occupies residues 1 to 20; that stretch reads MGLGVLCLALVLLGVLQSQA. Q21 bears the Pyrrolidone carboxylic acid mark. 72–74 is an a carboxymycobactin binding site; the sequence is YST. An N-linked (GlcNAc...) asparagine glycan is attached at N85. C96 and C195 are joined by a disulfide. Y126 is an enterobactin binding site. K145, K154, and Y158 together coordinate a carboxymycobactin. K154 contacts enterobactin.

It belongs to the calycin superfamily. Lipocalin family. Monomer. Homodimer; disulfide-linked. Heterodimer; disulfide-linked with MMP9. Detected in the ureteric bud in embryonic kidney (at protein level).

It localises to the secreted. It is found in the cytoplasmic granule lumen. The protein resides in the cytoplasmic vesicle lumen. Its function is as follows. Iron-trafficking protein involved in multiple processes such as apoptosis, innate immunity and renal development. Binds iron through association with 2,3-dihydroxybenzoic acid (2,3-DHBA), a siderophore that shares structural similarities with bacterial enterobactin, and delivers or removes iron from the cell, depending on the context. Iron-bound form (holo-24p3) is internalized following binding to the SLC22A17 (24p3R) receptor, leading to release of iron and subsequent increase of intracellular iron concentration. In contrast, association of the iron-free form (apo-24p3) with the SLC22A17 (24p3R) receptor is followed by association with an intracellular siderophore, iron chelation and iron transfer to the extracellular medium, thereby reducing intracellular iron concentration. Involved in apoptosis due to interleukin-3 (IL3) deprivation: iron-loaded form increases intracellular iron concentration without promoting apoptosis, while iron-free form decreases intracellular iron levels, inducing expression of the proapoptotic protein BCL2L11/BIM, resulting in apoptosis. Involved in innate immunity; limits bacterial proliferation by sequestering iron bound to microbial siderophores, such as enterobactin. Can also bind siderophores from M.tuberculosis. In Rattus norvegicus (Rat), this protein is Neutrophil gelatinase-associated lipocalin (Lcn2).